The sequence spans 297 residues: Large ribosomal subunit protein uL24m (297 aa).

The residue at position 2 (serine 2) is an N-acetylserine. Residues 63-96 (FIPGDRVVVMSGASKGNIAVIKSFDKRTNSFILD) enclose the KOW domain.

This sequence belongs to the universal ribosomal protein uL24 family. In terms of assembly, component of the mitochondrial large ribosomal subunit (mt-LSU). Mature yeast 74S mitochondrial ribosomes consist of a small (37S) and a large (54S) subunit. The 37S small subunit contains a 15S ribosomal RNA (15S mt-rRNA) and 34 different proteins. The 54S large subunit contains a 21S rRNA (21S mt-rRNA) and 46 different proteins. uL24m forms the wall of the exit tunnel.

It is found in the mitochondrion. Functionally, component of the mitochondrial ribosome (mitoribosome), a dedicated translation machinery responsible for the synthesis of mitochondrial genome-encoded proteins, including at least some of the essential transmembrane subunits of the mitochondrial respiratory chain. The mitoribosomes are attached to the mitochondrial inner membrane and translation products are cotranslationally integrated into the membrane. The sequence is that of Large ribosomal subunit protein uL24m (MRPL40) from Saccharomyces cerevisiae (strain ATCC 204508 / S288c) (Baker's yeast).